A 268-amino-acid polypeptide reads, in one-letter code: Tryptophan synthase alpha chain (268 aa).

Active-site proton acceptor residues include Glu49 and Asp60.

It belongs to the TrpA family. As to quaternary structure, tetramer of two alpha and two beta chains.

The catalysed reaction is (1S,2R)-1-C-(indol-3-yl)glycerol 3-phosphate + L-serine = D-glyceraldehyde 3-phosphate + L-tryptophan + H2O. It functions in the pathway amino-acid biosynthesis; L-tryptophan biosynthesis; L-tryptophan from chorismate: step 5/5. Its function is as follows. The alpha subunit is responsible for the aldol cleavage of indoleglycerol phosphate to indole and glyceraldehyde 3-phosphate. This is Tryptophan synthase alpha chain from Escherichia coli O6:K15:H31 (strain 536 / UPEC).